A 534-amino-acid polypeptide reads, in one-letter code: CTP synthase (534 aa).

Residues 1–268 (MSVKYIFVTG…AKIVCKRLGL (268 aa)) form an amidoligase domain region. Ser-14 is a binding site for CTP. Ser-14 provides a ligand contact to UTP. 15–20 (GLGKGI) lines the ATP pocket. Tyr-55 serves as a coordination point for L-glutamine. Residue Asp-72 coordinates ATP. The Mg(2+) site is built by Asp-72 and Glu-142. CTP contacts are provided by residues 149 to 151 (DIE), 189 to 194 (KTKPTQ), and Lys-225. UTP-binding positions include 189-194 (KTKPTQ) and Lys-225. Positions 293-534 (TIGLVGKYVE…VRAAYEYKTK (242 aa)) constitute a Glutamine amidotransferase type-1 domain. Gly-355 serves as a coordination point for L-glutamine. The active-site Nucleophile; for glutamine hydrolysis is Cys-382. L-glutamine is bound by residues 383–386 (LGMQ), Glu-406, and Arg-462. Active-site residues include His-507 and Glu-509.

It belongs to the CTP synthase family. Homotetramer.

The catalysed reaction is UTP + L-glutamine + ATP + H2O = CTP + L-glutamate + ADP + phosphate + 2 H(+). It carries out the reaction L-glutamine + H2O = L-glutamate + NH4(+). The enzyme catalyses UTP + NH4(+) + ATP = CTP + ADP + phosphate + 2 H(+). It functions in the pathway pyrimidine metabolism; CTP biosynthesis via de novo pathway; CTP from UDP: step 2/2. With respect to regulation, allosterically activated by GTP, when glutamine is the substrate; GTP has no effect on the reaction when ammonia is the substrate. The allosteric effector GTP functions by stabilizing the protein conformation that binds the tetrahedral intermediate(s) formed during glutamine hydrolysis. Inhibited by the product CTP, via allosteric rather than competitive inhibition. Its function is as follows. Catalyzes the ATP-dependent amination of UTP to CTP with either L-glutamine or ammonia as the source of nitrogen. Regulates intracellular CTP levels through interactions with the four ribonucleotide triphosphates. In Ruminiclostridium cellulolyticum (strain ATCC 35319 / DSM 5812 / JCM 6584 / H10) (Clostridium cellulolyticum), this protein is CTP synthase.